A 612-amino-acid polypeptide reads, in one-letter code: tRNA(Met) cytidine acetyltransferase TmcA (612 aa).

ATP is bound by residues Gln-136, 161 to 170, and Arg-284; that span reads GRGKSTLLGQ. Residues 319 to 499 enclose the N-acetyltransferase domain; that stretch reads KHASELEEAL…PAAIYALPLT (181 aa). 424–426 contributes to the acetyl-CoA binding site; that stretch reads IAV.

This sequence belongs to the RNA cytidine acetyltransferase family. TmcA subfamily.

Its subcellular location is the cytoplasm. The catalysed reaction is cytidine(34) in elongator tRNA(Met) + acetyl-CoA + ATP + H2O = N(4)-acetylcytidine(34) in elongator tRNA(Met) + ADP + phosphate + CoA + H(+). Functionally, catalyzes the formation of N(4)-acetylcytidine (ac(4)C) at the wobble position of tRNA(Met), by using acetyl-CoA as an acetyl donor and ATP (or GTP). The protein is tRNA(Met) cytidine acetyltransferase TmcA of Idiomarina loihiensis (strain ATCC BAA-735 / DSM 15497 / L2-TR).